A 409-amino-acid polypeptide reads, in one-letter code: Histone deacetylase 7 (409 aa).

The histone deacetylase stretch occupies residues 11–324 (RVSYFYEPMI…WCYETAIAVG (314 aa)). The active-site Proton donor/acceptor is H148. D267 is a binding site for Zn(2+). Residues 383-409 (PFQDTPSSSQATEAAEVDMEKRNDPRI) form a disordered region. A compositionally biased stretch (polar residues) spans 384-394 (FQDTPSSSQAT). Basic and acidic residues predominate over residues 400–409 (DMEKRNDPRI).

Belongs to the histone deacetylase family. HD type 1 subfamily. Zn(2+) is required as a cofactor. Low expression in flowers.

The protein resides in the nucleus. It catalyses the reaction N(6)-acetyl-L-lysyl-[histone] + H2O = L-lysyl-[histone] + acetate. Functionally, responsible for the deacetylation of lysine residues on the N-terminal part of the core histones (H2A, H2B, H3 and H4). Histone deacetylation gives a tag for epigenetic repression and plays an important role in transcriptional regulation, cell cycle progression and developmental events. May be involved in flowering induction. Histone deacetylases act via the formation of large multiprotein complexes. The polypeptide is Histone deacetylase 7 (HDA7) (Arabidopsis thaliana (Mouse-ear cress)).